The chain runs to 400 residues: Tryptophan synthase beta chain (400 aa).

Residue K91 is modified to N6-(pyridoxal phosphate)lysine.

It belongs to the TrpB family. Tetramer of two alpha and two beta chains. It depends on pyridoxal 5'-phosphate as a cofactor.

It carries out the reaction (1S,2R)-1-C-(indol-3-yl)glycerol 3-phosphate + L-serine = D-glyceraldehyde 3-phosphate + L-tryptophan + H2O. The protein operates within amino-acid biosynthesis; L-tryptophan biosynthesis; L-tryptophan from chorismate: step 5/5. Its function is as follows. The beta subunit is responsible for the synthesis of L-tryptophan from indole and L-serine. The protein is Tryptophan synthase beta chain of Listeria monocytogenes serovar 1/2a (strain ATCC BAA-679 / EGD-e).